The primary structure comprises 362 residues: UDP-N-acetylglucosamine--N-acetylmuramyl-(pentapeptide) pyrophosphoryl-undecaprenol N-acetylglucosamine transferase (362 aa).

UDP-N-acetyl-alpha-D-glucosamine is bound by residues T15–G17, N127, R165, S191, I247, A266–E271, and Q292.

It belongs to the glycosyltransferase 28 family. MurG subfamily.

The protein localises to the cell inner membrane. It carries out the reaction di-trans,octa-cis-undecaprenyl diphospho-N-acetyl-alpha-D-muramoyl-L-alanyl-D-glutamyl-meso-2,6-diaminopimeloyl-D-alanyl-D-alanine + UDP-N-acetyl-alpha-D-glucosamine = di-trans,octa-cis-undecaprenyl diphospho-[N-acetyl-alpha-D-glucosaminyl-(1-&gt;4)]-N-acetyl-alpha-D-muramoyl-L-alanyl-D-glutamyl-meso-2,6-diaminopimeloyl-D-alanyl-D-alanine + UDP + H(+). Its pathway is cell wall biogenesis; peptidoglycan biosynthesis. In terms of biological role, cell wall formation. Catalyzes the transfer of a GlcNAc subunit on undecaprenyl-pyrophosphoryl-MurNAc-pentapeptide (lipid intermediate I) to form undecaprenyl-pyrophosphoryl-MurNAc-(pentapeptide)GlcNAc (lipid intermediate II). The protein is UDP-N-acetylglucosamine--N-acetylmuramyl-(pentapeptide) pyrophosphoryl-undecaprenol N-acetylglucosamine transferase of Shewanella baltica (strain OS185).